An 862-amino-acid polypeptide reads, in one-letter code: Transcription initiation factor TFIID subunit 4B (862 aa).

Positions 100 to 241 (NTTTIQFPAN…TPSNEPNLKA (142 aa)) are sufficient for interaction with ZNF628. Over residues 219 to 237 (VTTLKPSSLGASSTPSNEP) the composition is skewed to polar residues. Residues 219 to 239 (VTTLKPSSLGASSTPSNEPNL) are disordered. In terms of domain architecture, TAFH spans 256–353 (LENVKKCKNF…CVQQTSSDMV (98 aa)). Residues 511-533 (PGPVLSQPAGIPQAVQVKQLVVQ) form a required for interaction with P65/RELA region. Positions 516 to 556 (SQPAGIPQAVQVKQLVVQQPSGGNEKQVTTISHSSTLTIQK) match the Nuclear export signal motif. Serine 595 bears the Phosphoserine mark. One can recognise a Histone-fold domain in the interval 653–702 (PFLFIGALQKRILDIGKKHDITELNSDAVNLISQATQERLRGLLEKLTAI). Positions 722–787 (TRSQLKFLEK…LAQIQHRDAN (66 aa)) form a coiled coil. Residues 830–862 (PRITRICLRDLIFCMEQEREMKYSRALYLALLK) are required for interaction with TAF12.

Belongs to the TAF4 family. As to quaternary structure, TFIID is composed of TATA binding protein (TBP) and a number of TBP-associated factors (TAFs). Heterodimerizes with TAF12/TFII20 via the C-terminal H2A-like histone-fold domain. This heterodimer forms a histone-like octamer with the TAF6/TAFII70-TAF9/TAFII31 heterodimer. Interacts with P65/RELA homodimers and P65/RELA-REL heterodimers. Interaction with POU2AF1, via its C-terminal activation domain, is required for octamer-dependent transcription. Interacts with ZNF628. In terms of processing, under stimulation by forskolin, Isoform 1 is phosphorylated by protein kinase A (PKA). Preferentially expressed in ovarian granulosa cells (at protein level). Highly expressed in B-cells.

Its subcellular location is the nucleus. The protein resides in the cytoplasm. Cell type-specific subunit of the general transcription factor TFIID that may function as a gene-selective coactivator in certain cells. TFIID is a multimeric protein complex that plays a central role in mediating promoter responses to various activators and repressors. TAF4B is a transcriptional coactivator of the p65/RELA NF-kappa-B subunit. Involved in the activation of a subset of antiapoptotic genes including TNFAIP3. May be involved in regulating folliculogenesis. Through interaction with OCBA/POU2AF1, acts as a coactivator of B-cell-specific transcription. Plays a role in spermiogenesis and oogenesis. The sequence is that of Transcription initiation factor TFIID subunit 4B (TAF4B) from Homo sapiens (Human).